A 351-amino-acid chain; its full sequence is Uroporphyrinogen decarboxylase (351 aa).

Substrate is bound by residues 25-29 (RQAGR), Asp-74, Tyr-151, Ser-206, and His-325.

This sequence belongs to the uroporphyrinogen decarboxylase family. As to quaternary structure, homodimer.

It is found in the cytoplasm. It catalyses the reaction uroporphyrinogen III + 4 H(+) = coproporphyrinogen III + 4 CO2. The protein operates within porphyrin-containing compound metabolism; protoporphyrin-IX biosynthesis; coproporphyrinogen-III from 5-aminolevulinate: step 4/4. In terms of biological role, catalyzes the decarboxylation of four acetate groups of uroporphyrinogen-III to yield coproporphyrinogen-III. The sequence is that of Uroporphyrinogen decarboxylase from Chlorobium phaeovibrioides (strain DSM 265 / 1930) (Prosthecochloris vibrioformis (strain DSM 265)).